The following is a 120-amino-acid chain: Purkinje cell protein 2 (120 aa).

2 consecutive GoLoco domains span residues Gln7–Leu29 and Met47–Val69. A disordered region spans residues His16–Pro120. A compositionally biased stretch (polar residues) spans Arg108 to Pro120. Ser111 is subject to Phosphoserine.

In terms of tissue distribution, cerebellum (Purkinje cells) and retinal bipolar neurons.

Its function is as follows. May function as a cell-type specific modulator for G protein-mediated cell signaling. The chain is Purkinje cell protein 2 (Pcp2) from Mus musculus (Mouse).